Consider the following 943-residue polypeptide: Isoleucine--tRNA ligase (943 aa).

The 'HIGH' region signature appears at 58-68 (PYANGTIHIGH). Glu-567 is a binding site for L-isoleucyl-5'-AMP. Residues 608 to 612 (KMSKS) carry the 'KMSKS' region motif. Residue Lys-611 coordinates ATP. Zn(2+) is bound by residues Cys-906, Cys-909, Cys-926, and Cys-929.

This sequence belongs to the class-I aminoacyl-tRNA synthetase family. IleS type 1 subfamily. In terms of assembly, monomer. Requires Zn(2+) as cofactor.

The protein localises to the cytoplasm. It catalyses the reaction tRNA(Ile) + L-isoleucine + ATP = L-isoleucyl-tRNA(Ile) + AMP + diphosphate. Its function is as follows. Catalyzes the attachment of isoleucine to tRNA(Ile). As IleRS can inadvertently accommodate and process structurally similar amino acids such as valine, to avoid such errors it has two additional distinct tRNA(Ile)-dependent editing activities. One activity is designated as 'pretransfer' editing and involves the hydrolysis of activated Val-AMP. The other activity is designated 'posttransfer' editing and involves deacylation of mischarged Val-tRNA(Ile). This is Isoleucine--tRNA ligase from Pseudomonas fluorescens (strain Pf0-1).